Consider the following 456-residue polypeptide: Glycerol-3-phosphate acyltransferase 4 (456 aa).

An N-terminal signal peptide occupies residues 1–37 (MFLLLPFDSLIVNLLGISLTVLFTLLLVFIIVPAIFG). 2 helical membrane-spanning segments follow: residues 156 to 176 (ISLRLTVLWGLGVLIRYCFLL) and 180 to 200 (IALAFTGISLLVVGTTVVGYL). A glycan (N-linked (GlcNAc...) asparagine) is linked at Asn247. The HXXXXD motif motif lies at 248-253 (HTSPID). N-linked (GlcNAc...) asparagine glycans are attached at residues Asn327, Asn328, and Asn362.

It belongs to the 1-acyl-sn-glycerol-3-phosphate acyltransferase family.

It is found in the endoplasmic reticulum membrane. It carries out the reaction sn-glycerol 3-phosphate + an acyl-CoA = a 1-acyl-sn-glycero-3-phosphate + CoA. The enzyme catalyses dodecanoyl-CoA + sn-glycerol 3-phosphate = 1-dodecanoyl-sn-glycerol 3-phosphate + CoA. The catalysed reaction is sn-glycerol 3-phosphate + hexadecanoyl-CoA = 1-hexadecanoyl-sn-glycero-3-phosphate + CoA. It catalyses the reaction sn-glycerol 3-phosphate + octadecanoyl-CoA = 1-octadecanoyl-sn-glycero-3-phosphate + CoA. It carries out the reaction sn-glycerol 3-phosphate + (9Z)-octadecenoyl-CoA = 1-(9Z-octadecenoyl)-sn-glycero-3-phosphate + CoA. The enzyme catalyses (9Z,12Z)-octadecadienoyl-CoA + sn-glycerol 3-phosphate = 1-(9Z,12Z)-octadecadienoyl-sn-glycero-3-phosphate + CoA. The protein operates within phospholipid metabolism; CDP-diacylglycerol biosynthesis; CDP-diacylglycerol from sn-glycerol 3-phosphate: step 1/3. Its function is as follows. Converts glycerol-3-phosphate to 1-acyl-sn-glycerol-3-phosphate (lysophosphatidic acid or LPA) by incorporating an acyl moiety at the sn-1 position of the glycerol backbone. Active against both saturated and unsaturated long-chain fatty acyl-CoAs. Protects cells against lipotoxicity. The protein is Glycerol-3-phosphate acyltransferase 4 of Pongo abelii (Sumatran orangutan).